The sequence spans 380 residues: Proline iminopeptidase (380 aa).

Residues Pro98–Asn360 enclose the AB hydrolase-1 domain. The active-site Nucleophile is the Ser172. Residue Asp329 is part of the active site. The active-site Proton donor is the His357.

Belongs to the peptidase S33 family.

It localises to the cytoplasm. The enzyme catalyses Release of N-terminal proline from a peptide.. Its function is as follows. Specifically catalyzes the removal of N-terminal proline residues from peptides. The protein is Proline iminopeptidase (PIP) of Arabidopsis thaliana (Mouse-ear cress).